A 166-amino-acid polypeptide reads, in one-letter code: Small ribosomal subunit protein uS5 (166 aa).

Positions 11–74 constitute an S5 DRBM domain; sequence LQEKLIAVNR…EKARRNMINV (64 aa).

Belongs to the universal ribosomal protein uS5 family. Part of the 30S ribosomal subunit. Contacts proteins S4 and S8.

In terms of biological role, with S4 and S12 plays an important role in translational accuracy. Its function is as follows. Located at the back of the 30S subunit body where it stabilizes the conformation of the head with respect to the body. This is Small ribosomal subunit protein uS5 from Haemophilus ducreyi (strain 35000HP / ATCC 700724).